The chain runs to 166 residues: Signal peptidase complex catalytic subunit SEC11 (166 aa).

Over Met-1 to Gln-9 the chain is Cytoplasmic. A helical; Signal-anchor for type II membrane protein membrane pass occupies residues Phe-10–Ile-30. The Lumenal portion of the chain corresponds to Thr-31–Glu-166. Catalysis depends on charge relay system residues Ser-44, His-83, and Asp-108. The segment at Gly-152–Leu-163 is C-terminal short (CTS) helix.

The protein belongs to the peptidase S26B family. Component of the signal peptidase complex (SPC) composed of a catalytic subunit SEC11 and three accessory subunits SPC1, SPC2 and SPC3. The complex induces a local thinning of the ER membrane which is used to measure the length of the signal peptide (SP) h-region of protein substrates. This ensures the selectivity of the complex towards h-regions shorter than 18-20 amino acids. SPC associates with the translocon complex.

It localises to the endoplasmic reticulum membrane. It catalyses the reaction Cleavage of hydrophobic, N-terminal signal or leader sequences from secreted and periplasmic proteins.. Catalytic component of the signal peptidase complex (SPC) which catalyzes the cleavage of N-terminal signal sequences from nascent proteins as they are translocated into the lumen of the endoplasmic reticulum. Specifically cleaves N-terminal signal peptides that contain a hydrophobic alpha-helix (h-region) shorter than 18-20 amino acids. This Scheffersomyces stipitis (strain ATCC 58785 / CBS 6054 / NBRC 10063 / NRRL Y-11545) (Yeast) protein is Signal peptidase complex catalytic subunit SEC11 (SEC11).